We begin with the raw amino-acid sequence, 495 residues long: Cytochrome P450 monooxygenase FrzC (495 aa).

The chain crosses the membrane as a helical span at residues 8 to 28 (GLVVGLWVTYHILLGTYNVFF). A heme-binding site is contributed by Cys437.

This sequence belongs to the cytochrome P450 family. Requires heme as cofactor.

The protein resides in the membrane. The catalysed reaction is (S,S)-2,5-di-(p-hydroxybenzyl)piperazine + reduced [NADPH--hemoprotein reductase] + O2 = (1S,4S)-4-[(4-hydroxyphenyl)methyl]-2,5-diazaspiro[bicyclo[3.2.1]octane-6,1'-cyclohexane]-2',5'-dien-4'-one + oxidized [NADPH--hemoprotein reductase] + 2 H2O + H(+). It participates in secondary metabolite biosynthesis. In terms of biological role, cytochrome P450 monooxygenase; part of the gene cluster that mediates the biosynthesis of the alkaloid (-)-FR901483, a potent immunosuppressant that shows efficacy in animal models and a probable inhibitor of purine nucleotide biosynthesis by targeting phosphoribosylpyrophosphate amidotransferase (PPAT). Within the pathway, FrzC catalyzes the coupling between N10 and C1' to produce a 1,4-diazabicyclo[3.2.1]octane spiro-fused to a 2,5-cyclohexadienone. FrzC probably first catalyzes homolysis of the N-H bond to generate the N10 radical which is followed by an O-H abstraction to give the phenolic radical which can be delocalized to C1'. Radical coupling between N10 and C1' then forms. The biosynthesis of (-)-FR901483 starts with the condensation of two L-tyrosines to yield (S,S)-dityrosyl-piperazine. This process occurs in 3 steps with the non-canonical nonribosomal peptide synthetase FrzA catalyzing the reduction of L-tyrosine into L-tyrosinal, the spontaneous condensation of 2 L-tyrosinal units, and the subsequent reduction by the NmrA-like family domain-containing oxidoreductase FrzB. The cytochrome P450 monooxygenase FrzC then performs coupling between N10 and C1' to morph the piperazine into a 1,4-diazabicyclo[3.2.1]octane spiro-fused to a 2,5-cyclohexadienone. The dienone portion is further reduced to cyclohexanone by the flavin-dependent reductase FrzD. The methyltranserases (MTs) FrzE and FrzF are then involved in the methylation at the C10' amine and the C4 phenolic oxygen, respectively. The order of the two MTs appear to be interchangeable. Cleavage of the C9-N10' bond by the dioxygenase FrzG then leads to formation of a conjugated iminium. In addition to the oxidation of C9, an additional dehydrogenation between C7 and C8 can occur to give a likely shunt product. The next biosynthetic step is the intramolecular aldol condensation catalyzed by the newly identified aldolase FrzH to yield an aza-tricyclic product with the formation of a C9-C3' bond. The short-chain dehydrogenase/reductase FrzI then produces dephospho-(-)-FR901483 that is phosphorylated at C4'-OH into (-)-FR901483 by the phosphotransferase FrzJ. This Cladobotryum sp protein is Cytochrome P450 monooxygenase FrzC.